A 185-amino-acid polypeptide reads, in one-letter code: Iron-sulfur assembly protein 2 (185 aa).

Fe cation-binding residues include cysteine 89, cysteine 175, and cysteine 177.

Belongs to the HesB/IscA family.

It is found in the mitochondrion matrix. Its function is as follows. Involved in the assembly of mitochondrial and cytoplasmic iron-sulfur proteins. Probably involved in the binding of an intermediate of Fe/S cluster assembly. The polypeptide is Iron-sulfur assembly protein 2 (ISA2) (Saccharomyces cerevisiae (strain ATCC 204508 / S288c) (Baker's yeast)).